We begin with the raw amino-acid sequence, 113 residues long: U11-theraphotoxin-Hhn1a (113 aa).

An N-terminal signal peptide occupies residues 1–21 (MNTVRVTFLLVFVLAVSLGQA). Positions 22–74 (DKDENRMEMQEKTEQGRSYLDFAENLLLQKLEELEAKLLEEDSEESRNSRQKR) are excised as a propeptide. Residues 61 to 83 (EEDSEESRNSRQKRCIGEGVPCD) are disordered. Cystine bridges form between C75/C90, C82/C95, and C89/C110.

Belongs to the neurotoxin 14 (magi-1) family. 01 (HNTX-16) subfamily. In terms of tissue distribution, expressed by the venom gland.

The protein localises to the secreted. Its function is as follows. Probable ion channel inhibitor. This Cyriopagopus hainanus (Chinese bird spider) protein is U11-theraphotoxin-Hhn1a.